An 884-amino-acid polypeptide reads, in one-letter code: Formin-like protein 9 (884 aa).

Positions 1–19 (MGMAMRCVLVLFSVSPVLL) are cleaved as a signal peptide. The chain crosses the membrane as a helical span at residues 140–160 (IVALGVVGLCLVVLGVVIAAF). 3 disordered regions span residues 179-204 (FHHG…PDPL), 295-318 (THDS…LSPK), and 403-473 (TMTN…PLPR). Low complexity predominate over residues 300 to 310 (SDSSYQSLSPD). The span at 429 to 443 (KPAPPPPPQKNPPPN) shows a compositional bias: pro residues. An FH2 domain is found at 464–884 (VGKDGSPLPR…QTLNLVLPLK (421 aa)).

The protein belongs to the formin-like family. Class-I subfamily.

Its subcellular location is the membrane. This Oryza sativa subsp. indica (Rice) protein is Formin-like protein 9 (FH9).